Consider the following 448-residue polypeptide: N-succinylarginine dihydrolase (448 aa).

Residues Ala19–Ser28, Asn110, and His137–Arg138 contribute to the substrate site. Glu174 is a catalytic residue. Arg216 contributes to the substrate binding site. The active site involves His252. Positions 254 and 366 each coordinate substrate. The active-site Nucleophile is Cys372.

This sequence belongs to the succinylarginine dihydrolase family. Homodimer.

The catalysed reaction is N(2)-succinyl-L-arginine + 2 H2O + 2 H(+) = N(2)-succinyl-L-ornithine + 2 NH4(+) + CO2. Its pathway is amino-acid degradation; L-arginine degradation via AST pathway; L-glutamate and succinate from L-arginine: step 2/5. Functionally, catalyzes the hydrolysis of N(2)-succinylarginine into N(2)-succinylornithine, ammonia and CO(2). In Legionella pneumophila (strain Lens), this protein is N-succinylarginine dihydrolase.